Consider the following 120-residue polypeptide: uncharacterized protein (120 aa).

A run of 3 helical transmembrane segments spans residues 24–44, 61–81, and 86–106; these read ALLGYRIMAWTTGLWLIALCY, IGVVHGWVYFTYLLLTLNLAV, and PLGKTAGVLLAGTIPLLGIVV.

To M.leprae ML1176.

The protein resides in the cell membrane. This is an uncharacterized protein from Mycobacterium bovis (strain ATCC BAA-935 / AF2122/97).